The sequence spans 344 residues: Rho guanine nucleotide exchange factor 39 (344 aa).

The DH domain maps to 22–197 (KRVCTARELL…SETAQKVHAI (176 aa)). The PH domain maps to 227 to 331 (WFLRQGWLLV…WHHSLTLAIR (105 aa)).

The protein localises to the cell membrane. Its function is as follows. Promotes cell proliferation. This is Rho guanine nucleotide exchange factor 39 (Arhgef39) from Mus musculus (Mouse).